Reading from the N-terminus, the 348-residue chain is N-acetyl-gamma-glutamyl-phosphate reductase (348 aa).

C151 is an active-site residue.

This sequence belongs to the NAGSA dehydrogenase family. Type 1 subfamily.

It localises to the cytoplasm. The enzyme catalyses N-acetyl-L-glutamate 5-semialdehyde + phosphate + NADP(+) = N-acetyl-L-glutamyl 5-phosphate + NADPH + H(+). It functions in the pathway amino-acid biosynthesis; L-arginine biosynthesis; N(2)-acetyl-L-ornithine from L-glutamate: step 3/4. In terms of biological role, catalyzes the NADPH-dependent reduction of N-acetyl-5-glutamyl phosphate to yield N-acetyl-L-glutamate 5-semialdehyde. The sequence is that of N-acetyl-gamma-glutamyl-phosphate reductase from Lachnospira eligens (strain ATCC 27750 / DSM 3376 / VPI C15-48 / C15-B4) (Eubacterium eligens).